The chain runs to 485 residues: UDP-N-acetylmuramate--L-alanine ligase (485 aa).

120–126 serves as a coordination point for ATP; that stretch reads GSHGKTT.

This sequence belongs to the MurCDEF family.

Its subcellular location is the cytoplasm. The enzyme catalyses UDP-N-acetyl-alpha-D-muramate + L-alanine + ATP = UDP-N-acetyl-alpha-D-muramoyl-L-alanine + ADP + phosphate + H(+). It functions in the pathway cell wall biogenesis; peptidoglycan biosynthesis. Functionally, cell wall formation. The polypeptide is UDP-N-acetylmuramate--L-alanine ligase (Rickettsia conorii (strain ATCC VR-613 / Malish 7)).